Consider the following 171-residue polypeptide: Probable chorismate pyruvate-lyase (171 aa).

The substrate site is built by Met36, Arg78, Leu116, and Glu157.

This sequence belongs to the UbiC family.

The protein resides in the cytoplasm. The enzyme catalyses chorismate = 4-hydroxybenzoate + pyruvate. The protein operates within cofactor biosynthesis; ubiquinone biosynthesis. Removes the pyruvyl group from chorismate, with concomitant aromatization of the ring, to provide 4-hydroxybenzoate (4HB) for the ubiquinone pathway. The sequence is that of Probable chorismate pyruvate-lyase from Bartonella henselae (strain ATCC 49882 / DSM 28221 / CCUG 30454 / Houston 1) (Rochalimaea henselae).